Reading from the N-terminus, the 158-residue chain is Protein Smg homolog (158 aa).

This sequence belongs to the Smg family.

The protein is Protein Smg homolog of Shewanella sp. (strain MR-4).